A 142-amino-acid polypeptide reads, in one-letter code: Two-component response regulator ARR22 (142 aa).

Residues 23–140 (NVLIVDDDPL…KIFPLISHLF (118 aa)) form the Response regulatory domain. Asp-74 is subject to 4-aspartylphosphate.

The protein belongs to the ARR family. Type-A subfamily. Two-component system major event consists of a His-to-Asp phosphorelay between a sensor histidine kinase (HK) and a response regulator (RR). In plants, the His-to-Asp phosphorelay involves an additional intermediate named Histidine-containing phosphotransfer protein (HPt). This multistep phosphorelay consists of a His-Asp-His-Asp sequential transfer of a phosphate group between first a His and an Asp of the HK protein, followed by the transfer to a conserved His of the HPt protein and finally the transfer to an Asp in the receiver domain of the RR protein.

The protein resides in the nucleus. Functionally, functions as a response regulator involved in His-to-Asp phosphorelay signal transduction system. Phosphorylation of the Asp residue in the receiver domain activates the ability of the protein to promote the transcription of target genes. Type-A response regulators seem to act as negative regulators of the cytokinin signaling. In Arabidopsis thaliana (Mouse-ear cress), this protein is Two-component response regulator ARR22 (ARR22).